A 122-amino-acid chain; its full sequence is Dihydroneopterin aldolase (122 aa).

Substrate contacts are provided by residues Glu-21, Tyr-53, and 72–73 (VE). Lys-98 acts as the Proton donor/acceptor in catalysis.

The protein belongs to the DHNA family. In terms of assembly, homooctamer.

The enzyme catalyses 7,8-dihydroneopterin = 6-hydroxymethyl-7,8-dihydropterin + glycolaldehyde. It catalyses the reaction 7,8-dihydroneopterin = 7,8-dihydromonapterin. It functions in the pathway cofactor biosynthesis; tetrahydrofolate biosynthesis; 2-amino-4-hydroxy-6-hydroxymethyl-7,8-dihydropteridine diphosphate from 7,8-dihydroneopterin triphosphate: step 3/4. Functionally, catalyzes the conversion of 7,8-dihydroneopterin to 6-hydroxymethyl-7,8-dihydropterin. Can use L-threo-dihydroneopterin and D-erythro-dihydroneopterin as substrates for the formation of 6-hydroxymethyldihydropterin, but it can also catalyze the epimerization of carbon 2' of dihydroneopterin to dihydromonapterin at appreciable velocity. The chain is Dihydroneopterin aldolase (folB) from Escherichia coli O6:H1 (strain CFT073 / ATCC 700928 / UPEC).